We begin with the raw amino-acid sequence, 653 residues long: E3 ubiquitin-protein ligase TRIM32 (653 aa).

The residue at position 2 (Ala-2) is an N-acetylalanine. The RING-type zinc-finger motif lies at 20–65; sequence CPICMESFTEEQLRPKLLHCGHTICRQCLEKLLASSINGVRCPFCS. Ser-55 is modified (phosphoserine; by CHEK2). 4 residues coordinate Zn(2+): Cys-100, Cys-103, Cys-123, and His-128. The B box-type zinc finger occupies 103–133; it reads CGRRLPRQFCRSCGLVLCEPCREADHQPPGH. Residues 138 to 197 are a coiled coil; it reads VKEAAEERRRDFGEKLTRLRELMGELQRRKAALEGVSKDLQARYKAVLQEYGHEERRVQD. Phosphoserine is present on residues Ser-328, Ser-335, and Ser-339. 5 NHL repeats span residues 358 to 401, 415 to 458, 459 to 499, 562 to 605, and 606 to 646; these read LKKM…FTRK, DSFV…YTLD, GHCV…FTVD, GRQI…FPKG, and GGYS…YSYH.

It belongs to the TRIM/RBCC family. It self-associates. Interacts with DTNBP1. Interacts with PIAS4/PIASY upon treatment with UVB and TNF-alpha. Interacts with AMBRA1; promoting activation of ULK1 through unanchored 'Lys-63'-linked polyubiquitin chains. Interacts with TICAM1 and TAX1BP1; these interactions target TICAM1 to TAX1BP1-mediated selective autophagic degradation. In terms of assembly, (Microbial infection) Interacts with S.typhimurium protein SseK3; SseK3 does not glycosylate TRIM32. Ubiquitinated. Post-translationally, phosphorylation at Ser-55 by CHEK2 under oxidative stress, activates the E3 ligase activity and promotes ATG7 ubiquitination leading to positive regulation of the autophagosme assembly. Spleen, thymus, prostate, testis, ovary, intestine, colon and skeletal muscle.

The protein localises to the cytoplasm. It is found in the mitochondrion. It localises to the endoplasmic reticulum. It carries out the reaction S-ubiquitinyl-[E2 ubiquitin-conjugating enzyme]-L-cysteine + [acceptor protein]-L-lysine = [E2 ubiquitin-conjugating enzyme]-L-cysteine + N(6)-ubiquitinyl-[acceptor protein]-L-lysine.. Its pathway is protein modification; protein ubiquitination. E3 ubiquitin ligase that plays a role in various biological processes including neural stem cell differentiation, innate immunity, inflammatory resonse and autophagy. Plays a role in virus-triggered induction of IFN-beta and TNF-alpha by mediating the ubiquitination of STING1. Mechanistically, targets STING1 for 'Lys-63'-linked ubiquitination which promotes the interaction of STING1 with TBK1. Regulates bacterial clearance and promotes autophagy in Mycobacterium tuberculosis-infected macrophages. Negatively regulates TLR3/4-mediated innate immune and inflammatory response by triggering the autophagic degradation of TICAM1 in an E3 activity-independent manner. Plays an essential role in oxidative stress induced cell death by inducing loss of transmembrane potential and enhancing mitochondrial reactive oxygen species (ROS) production during oxidative stress conditions. Ubiquitinates XIAP and targets it for proteasomal degradation. Ubiquitinates DTNBP1 (dysbindin) and promotes its degradation. May ubiquitinate BBS2. Ubiquitinates PIAS4/PIASY and promotes its degradation in keratinocytes treated with UVB and TNF-alpha. Also acts as a regulator of autophagy by mediating formation of unanchored 'Lys-63'-linked polyubiquitin chains that activate ULK1: interaction with AMBRA1 is required for ULK1 activation. Positively regulates dendritic branching by promoting ubiquitination and subsequent degradation of the epigenetic factor CDYL. Under metabolic stress and phosphorylation by CHK2, mediates 'Lys-63'-linked ubiquitination of ATG7 at 'Lys-45' to initiate autophagy. Its function is as follows. (Microbial infection) May play a significant role in mediating the biological activity of the HIV-1 Tat protein in vivo. Binds specifically to the activation domain of HIV-1 Tat and can also interact with the HIV-2 and EIAV Tat proteins in vivo. This is E3 ubiquitin-protein ligase TRIM32 from Homo sapiens (Human).